We begin with the raw amino-acid sequence, 383 residues long: Processive diacylglycerol beta-glucosyltransferase (383 aa).

The protein belongs to the glycosyltransferase 28 family. UgtP subfamily.

The protein resides in the cell membrane. The catalysed reaction is a 1,2-diacyl-3-O-(beta-D-glucopyranosyl)-sn-glycerol + UDP-alpha-D-glucose = a 1,2-diacyl-3-O-(beta-D-Glc-(1-&gt;6)-beta-D-Glc)-sn-glycerol + UDP + H(+). It catalyses the reaction a 1,2-diacyl-3-O-(beta-D-Glc-(1-&gt;6)-beta-D-Glc)-sn-glycerol + UDP-alpha-D-glucose = a 1,2-diacyl-3-O-(beta-D-Glc-(1-&gt;6)-beta-D-Glc-(1-&gt;6)-beta-D-Glc)-sn-glycerol + UDP + H(+). It carries out the reaction a 1,2-diacyl-sn-glycerol + UDP-alpha-D-glucose = a 1,2-diacyl-3-O-(beta-D-glucopyranosyl)-sn-glycerol + UDP + H(+). Its pathway is glycolipid metabolism; diglucosyl-diacylglycerol biosynthesis. In terms of biological role, processive glucosyltransferase involved in the biosynthesis of both the bilayer- and non-bilayer-forming membrane glucolipids. Is able to successively transfer up to three glucosyl residues to diacylglycerol (DAG), thereby catalyzing the formation of beta-monoglucosyl-DAG (3-O-(beta-D-glucopyranosyl)-1,2-diacyl-sn-glycerol), beta-diglucosyl-DAG (3-O-(beta-D-glucopyranosyl-beta-(1-&gt;6)-D-glucopyranosyl)-1,2-diacyl-sn-glycerol) and beta-triglucosyl-DAG (3-O-(beta-D-glucopyranosyl-beta-(1-&gt;6)-D-glucopyranosyl-beta-(1-&gt;6)-D-glucopyranosyl)-1,2-diacyl-sn-glycerol). Beta-diglucosyl-DAG is the predominant glycolipid found in Bacillales and is also used as a membrane anchor for lipoteichoic acid (LTA). The polypeptide is Processive diacylglycerol beta-glucosyltransferase (Bacillus pumilus (strain SAFR-032)).